A 276-amino-acid chain; its full sequence is Large ribosomal subunit protein uL2 (276 aa).

Residues 213-264 are disordered; it reads WLGRRPHNRGVVMNPVDHPHGGGEGRTSGGRHPVTPWGKPTKGYKTRTNKRT.

The protein belongs to the universal ribosomal protein uL2 family. As to quaternary structure, part of the 50S ribosomal subunit. Forms a bridge to the 30S subunit in the 70S ribosome.

One of the primary rRNA binding proteins. Required for association of the 30S and 50S subunits to form the 70S ribosome, for tRNA binding and peptide bond formation. It has been suggested to have peptidyltransferase activity; this is somewhat controversial. Makes several contacts with the 16S rRNA in the 70S ribosome. This chain is Large ribosomal subunit protein uL2, found in Granulibacter bethesdensis (strain ATCC BAA-1260 / CGDNIH1).